A 759-amino-acid polypeptide reads, in one-letter code: Forkhead box protein M1 (759 aa).

Residues 1-92 (MRTSPRRPLI…MRLPSNPPQS (92 aa)) form a disordered region. Residues 48 to 63 (LAHELEDMAPKSKADQ) are compositionally biased toward basic and acidic residues. A DNA-binding region (fork-head) is located at residues 260-358 (RPPYSYMALI…KTASPMSPAD (99 aa)). 3 disordered regions span residues 420–450 (AESS…KHLG), 516–535 (SANP…PSNV), and 596–631 (KEHF…RDPV). Residues 601-612 (KPTTSSTPSKPT) show a composition bias toward low complexity.

As to expression, localized to the animal hemisphere of early cleavage stage embryos. During neurulation, expressed in the neural folds. Later, expressed in the spinal cord and in the eye field. During tailbud stages, expression is still restricted to the neuroectoderm, predominantly to the hindbrain, the eye and the spinal cord. With ongoing development, expression is also found at lower levels in the branchial arches. At stage 35, expressed in the rhombencephalon and in the eye retina.

It is found in the nucleus. In terms of biological role, transcription factor regulating the expression of cell cycle genes essential for DNA replication and mitosis. Plays a role in the control of cell proliferation. Also plays a role in DNA break repair, participating in the DNA damage checkpoint response. Promotes transcription of PHB2. In Xenopus laevis (African clawed frog), this protein is Forkhead box protein M1.